We begin with the raw amino-acid sequence, 206 residues long: Probable glutathione S-transferase 6 (206 aa).

Residues 2–79 (VHYKLVYFPL…YLAREFGIAG (78 aa)) form the GST N-terminal domain. Residues Tyr-8, Trp-39, Lys-43, 49-51 (GQL), and 63-64 (QS) contribute to the glutathione site. One can recognise a GST C-terminal domain in the interval 81–206 (NDTEAAEVDA…YIANRPDYPF (126 aa)).

This sequence belongs to the GST superfamily. Sigma family.

It catalyses the reaction RX + glutathione = an S-substituted glutathione + a halide anion + H(+). Its function is as follows. Conjugation of reduced glutathione to a wide number of exogenous and endogenous hydrophobic electrophiles. In Caenorhabditis elegans, this protein is Probable glutathione S-transferase 6 (gst-6).